Consider the following 35-residue polypeptide: Kappa-theraphotoxin-Tb1a (35 aa).

Cystine bridges form between cysteine 3–cysteine 18, cysteine 10–cysteine 23, and cysteine 17–cysteine 30.

It belongs to the neurotoxin 10 (Hwtx-1) family. 59 (Tltx) subfamily. Monomer. As to expression, expressed by the venom gland.

The protein localises to the secreted. In terms of biological role, blocks Kv4.2/KCND2 voltage-gated potassium channels (IC(50) is 193.0 nM) by shifting the voltage-dependence of channel activation to more depolarized potentials. The toxin is thought to bind to the S3-S4 linker region of the voltage sensor domain. The polypeptide is Kappa-theraphotoxin-Tb1a (Theraphosa blondi (Goliath birdeating spider)).